Here is a 203-residue protein sequence, read N- to C-terminus: Ribosome hibernation promotion factor (203 aa).

This sequence belongs to the HPF/YfiA ribosome-associated protein family. Long HPF subfamily. Interacts with 100S ribosomes.

It is found in the cytoplasm. Required for dimerization of active 70S ribosomes into 100S ribosomes in stationary phase; 100S ribosomes are translationally inactive and sometimes present during exponential growth. In Bradyrhizobium diazoefficiens (strain JCM 10833 / BCRC 13528 / IAM 13628 / NBRC 14792 / USDA 110), this protein is Ribosome hibernation promotion factor.